The primary structure comprises 200 residues: Shikimate kinase (200 aa).

Position 41 to 46 (Gly-41 to Ser-46) interacts with ATP. Ser-45 is a binding site for Mg(2+). 3 residues coordinate substrate: Asp-63, Arg-87, and Gly-109. Arg-147 is an ATP binding site. Arg-166 lines the substrate pocket.

This sequence belongs to the shikimate kinase family. In terms of assembly, monomer. It depends on Mg(2+) as a cofactor.

Its subcellular location is the cytoplasm. The catalysed reaction is shikimate + ATP = 3-phosphoshikimate + ADP + H(+). It participates in metabolic intermediate biosynthesis; chorismate biosynthesis; chorismate from D-erythrose 4-phosphate and phosphoenolpyruvate: step 5/7. In terms of biological role, catalyzes the specific phosphorylation of the 3-hydroxyl group of shikimic acid using ATP as a cosubstrate. This chain is Shikimate kinase, found in Caulobacter vibrioides (strain NA1000 / CB15N) (Caulobacter crescentus).